A 443-amino-acid chain; its full sequence is MSTKRGVTSQDSISLLPDDLLCRILSNLPTKVAVRTSVLSKRWKRFSLSVPLLEFNVSEFHGYYEFARVVHGFLDTSRETCIHKLKLAFEKKQHDRSYLTQWIHNAVKRKVQHLDIGRWSYLGQELIPHSLYTCETLVSLRLHNVSLPDFDHVSLPRLKTMHLIDNIYPNDALLENLISSCPVLEDLNVSRDVENIVKVLRVRSLSLKSLILALDGDRYGDIEDDSWEVVIDAPRLSYLSLRDDQSKSFVLSSVTSPAKVDIDVTFDVVRSVLKNFLLTRSVVRNFFTRLSSVRDMTMSGTTLKVLSRYMRHEPLPQFPNMIQFYAVFCNSDLEKLPNFLESCPNLKSLVLELEVFKKNDLLILSSSIPKCLRSSLEHVEIHTPISGAEAEMKLVKYFLENSAVLKKFTLQLGCKRMDEESIIFKELLRFRRCSASCEVVVEV.

The F-box domain occupies 10–56 (QDSISLLPDDLLCRILSNLPTKVAVRTSVLSKRWKRFSLSVPLLEFN). LRR repeat units follow at residues 139–165 (SLRL…HLID), 166–191 (NIYP…NVSR), 219–243 (YGDI…SLRD), 275–300 (NFLL…TMSG), and 325–353 (YAVF…VLEL). Residues 361-412 (LLILSSSIPKCLRSSLEHVEIHTPISGAEAEMKLVKYFLENSAVLKKFTLQL) enclose the FBD domain.

The chain is Putative F-box/FBD/LRR-repeat protein At5g22670 from Arabidopsis thaliana (Mouse-ear cress).